Consider the following 432-residue polypeptide: Adenylosuccinate synthetase (432 aa).

GTP contacts are provided by residues 13–19 (GDEGKGK) and 41–43 (GHT). The Proton acceptor role is filled by D14. Mg(2+) contacts are provided by D14 and G41. IMP-binding positions include 14-17 (DEGK), 39-42 (NAGH), T130, R144, Q225, T240, and R304. Catalysis depends on H42, which acts as the Proton donor. 300 to 306 (STTGRRR) is a substrate binding site. Residues R306, 332–334 (KID), and 415–417 (STG) each bind GTP.

This sequence belongs to the adenylosuccinate synthetase family. In terms of assembly, homodimer. Mg(2+) is required as a cofactor.

The protein localises to the cytoplasm. It catalyses the reaction IMP + L-aspartate + GTP = N(6)-(1,2-dicarboxyethyl)-AMP + GDP + phosphate + 2 H(+). It functions in the pathway purine metabolism; AMP biosynthesis via de novo pathway; AMP from IMP: step 1/2. In terms of biological role, plays an important role in the de novo pathway of purine nucleotide biosynthesis. Catalyzes the first committed step in the biosynthesis of AMP from IMP. The chain is Adenylosuccinate synthetase from Blochmanniella pennsylvanica (strain BPEN).